The primary structure comprises 108 residues: Small ribosomal subunit protein eS25y (108 aa).

A disordered region spans residues 1–36; the sequence is MAPKKDKVPPPSSKPAKSGGGKQKKKKWSKGKQKEK. A compositionally biased stretch (basic residues) spans 22 to 31; that stretch reads KQKKKKWSKG.

The protein belongs to the eukaryotic ribosomal protein eS25 family.

This chain is Small ribosomal subunit protein eS25y (RPS25B), found in Arabidopsis thaliana (Mouse-ear cress).